The sequence spans 169 residues: Peptide methionine sulfoxide reductase MsrA (169 aa).

Cysteine 10 is a catalytic residue.

The protein belongs to the MsrA Met sulfoxide reductase family.

The catalysed reaction is L-methionyl-[protein] + [thioredoxin]-disulfide + H2O = L-methionyl-(S)-S-oxide-[protein] + [thioredoxin]-dithiol. It catalyses the reaction [thioredoxin]-disulfide + L-methionine + H2O = L-methionine (S)-S-oxide + [thioredoxin]-dithiol. Functionally, has an important function as a repair enzyme for proteins that have been inactivated by oxidation. Catalyzes the reversible oxidation-reduction of methionine sulfoxide in proteins to methionine. The chain is Peptide methionine sulfoxide reductase MsrA from Streptococcus pyogenes serotype M1.